The following is a 213-amino-acid chain: MTEAATQPALVIPQLIVGLGNPESKYDQTRHNIGFAAVEALSRSWRISLAENRKFQGEYGEGMAPGGGKIRLLKPLTYMNRSGQSIQAVTSWYKLPPESVLIIYDDMDLPLGKTRLRLSGSAGGHNGMKSAIAHLSTQNFPRLRIGIGKPKGAADNDDSNTVSHVLGRFSSAENQQMSLVLQFVVECIELSLKQGVEKAMNVCNSRTINNSES.

Residue Y26 participates in tRNA binding. H31 serves as the catalytic Proton acceptor. TRNA is bound by residues Y78, N80, and N126.

Belongs to the PTH family. Monomer.

It localises to the cytoplasm. It catalyses the reaction an N-acyl-L-alpha-aminoacyl-tRNA + H2O = an N-acyl-L-amino acid + a tRNA + H(+). In terms of biological role, hydrolyzes ribosome-free peptidyl-tRNAs (with 1 or more amino acids incorporated), which drop off the ribosome during protein synthesis, or as a result of ribosome stalling. Its function is as follows. Catalyzes the release of premature peptidyl moieties from peptidyl-tRNA molecules trapped in stalled 50S ribosomal subunits, and thus maintains levels of free tRNAs and 50S ribosomes. The protein is Peptidyl-tRNA hydrolase of Nostoc punctiforme (strain ATCC 29133 / PCC 73102).